Here is a 251-residue protein sequence, read N- to C-terminus: MSRKVIAAGNWKMNKTPKEAVEFVQALKGRVADADTEVVVGVPFVCLPGVVEAAKGSNIKVAAQNMHWEEKGAFTGEVSGPMLAELGVDYVIIGHSERRQYFGETDETVNKKVHAAFKYGLKPIICVGESLTQREQGVTAELVRYQVKIALLGLSAEQVKEAVIAYEPIWAIGTGKTATNEQAEEVCGIIRECIKELYGQDVAEAIRIQYGGSVNAANAAELFNMPNIDGGLVGGASLKLDDFEKIAKYNK.

A substrate-binding site is contributed by 10–12 (NWK). The Electrophile role is filled by H95. E167 (proton acceptor) is an active-site residue. Residues G173, S213, and 234–235 (GG) each bind substrate.

The protein belongs to the triosephosphate isomerase family. As to quaternary structure, homodimer.

It is found in the cytoplasm. The enzyme catalyses D-glyceraldehyde 3-phosphate = dihydroxyacetone phosphate. It participates in carbohydrate biosynthesis; gluconeogenesis. The protein operates within carbohydrate degradation; glycolysis; D-glyceraldehyde 3-phosphate from glycerone phosphate: step 1/1. Functionally, involved in the gluconeogenesis. Catalyzes stereospecifically the conversion of dihydroxyacetone phosphate (DHAP) to D-glyceraldehyde-3-phosphate (G3P). This is Triosephosphate isomerase from Acetivibrio thermocellus (strain ATCC 27405 / DSM 1237 / JCM 9322 / NBRC 103400 / NCIMB 10682 / NRRL B-4536 / VPI 7372) (Clostridium thermocellum).